We begin with the raw amino-acid sequence, 131 residues long: D-ribose pyranase (131 aa).

The active-site Proton donor is the His-20. Residues Asp-28, His-98, and 120-122 (YAN) each bind substrate.

It belongs to the RbsD / FucU family. RbsD subfamily. As to quaternary structure, homodecamer.

Its subcellular location is the cytoplasm. The enzyme catalyses beta-D-ribopyranose = beta-D-ribofuranose. It participates in carbohydrate metabolism; D-ribose degradation; D-ribose 5-phosphate from beta-D-ribopyranose: step 1/2. Functionally, catalyzes the interconversion of beta-pyran and beta-furan forms of D-ribose. This is D-ribose pyranase from Clostridium perfringens (strain 13 / Type A).